Consider the following 247-residue polypeptide: MRILLSNDDGYFAPGIANLAKVLLEIADVTVVAPERDRSGASNSLTLDRPLSLHKSHNGFYYVNGTPTDCVHLAVTGMLDELPDMVISGINDGANMGDDTVYSGTVAAATEGFLLGLPSIAVSLVSMSRGNFPTAARIVVDLVKRFTENRFHIPILLNVNVPDVPYDELQGVEVTRLGRRHKAESVIKYQTPRGETVYWVGAAGAAQDAGEGTDFFALQNNRVSITPLQIDLTRYDQIGYVKNWLTL.

Positions 8, 9, 39, and 91 each coordinate a divalent metal cation.

It belongs to the SurE nucleotidase family. Requires a divalent metal cation as cofactor.

Its subcellular location is the cytoplasm. It carries out the reaction a ribonucleoside 5'-phosphate + H2O = a ribonucleoside + phosphate. In terms of biological role, nucleotidase that shows phosphatase activity on nucleoside 5'-monophosphates. The protein is 5'-nucleotidase SurE of Nitrosomonas europaea (strain ATCC 19718 / CIP 103999 / KCTC 2705 / NBRC 14298).